Here is a 182-residue protein sequence, read N- to C-terminus: tRNA-splicing endonuclease (182 aa).

Catalysis depends on residues Tyr-119, His-127, and Lys-158.

The protein belongs to the tRNA-intron endonuclease family. Archaeal short subfamily. As to quaternary structure, homotetramer; although the tetramer contains four active sites, only two participate in the cleavage. Therefore, it should be considered as a dimer of dimers.

The catalysed reaction is pretRNA = a 3'-half-tRNA molecule with a 5'-OH end + a 5'-half-tRNA molecule with a 2',3'-cyclic phosphate end + an intron with a 2',3'-cyclic phosphate and a 5'-hydroxyl terminus.. Endonuclease that removes tRNA introns. Cleaves pre-tRNA at the 5'- and 3'-splice sites to release the intron. The products are an intron and two tRNA half-molecules bearing 2',3' cyclic phosphate and 5'-OH termini. Recognizes a pseudosymmetric substrate in which 2 bulged loops of 3 bases are separated by a stem of 4 bp. This is tRNA-splicing endonuclease from Saccharolobus islandicus (strain Y.N.15.51 / Yellowstone #2) (Sulfolobus islandicus).